A 243-amino-acid polypeptide reads, in one-letter code: Phosphatidylserine decarboxylase proenzyme (243 aa).

Ser-212 serves as the catalytic Schiff-base intermediate with substrate; via pyruvic acid. The residue at position 212 (Ser-212) is a Pyruvic acid (Ser); by autocatalysis.

It belongs to the phosphatidylserine decarboxylase family. PSD-A subfamily. As to quaternary structure, heterodimer of a large membrane-associated beta subunit and a small pyruvoyl-containing alpha subunit. The cofactor is pyruvate. In terms of processing, is synthesized initially as an inactive proenzyme. Formation of the active enzyme involves a self-maturation process in which the active site pyruvoyl group is generated from an internal serine residue via an autocatalytic post-translational modification. Two non-identical subunits are generated from the proenzyme in this reaction, and the pyruvate is formed at the N-terminus of the alpha chain, which is derived from the carboxyl end of the proenzyme. The post-translation cleavage follows an unusual pathway, termed non-hydrolytic serinolysis, in which the side chain hydroxyl group of the serine supplies its oxygen atom to form the C-terminus of the beta chain, while the remainder of the serine residue undergoes an oxidative deamination to produce ammonia and the pyruvoyl prosthetic group on the alpha chain.

It is found in the cell membrane. It carries out the reaction a 1,2-diacyl-sn-glycero-3-phospho-L-serine + H(+) = a 1,2-diacyl-sn-glycero-3-phosphoethanolamine + CO2. Its pathway is phospholipid metabolism; phosphatidylethanolamine biosynthesis; phosphatidylethanolamine from CDP-diacylglycerol: step 2/2. Functionally, catalyzes the formation of phosphatidylethanolamine (PtdEtn) from phosphatidylserine (PtdSer). In Mycobacterium leprae (strain Br4923), this protein is Phosphatidylserine decarboxylase proenzyme.